Consider the following 131-residue polypeptide: uncharacterized protein (131 aa).

The interval 15-43 (QLQAEHGSAPSNIASGPSSNQQQQEVQDE) is disordered. The span at 23-34 (APSNIASGPSSN) shows a compositional bias: polar residues.

This sequence belongs to the PDCD5 family.

This is an uncharacterized protein from Schizosaccharomyces pombe (strain 972 / ATCC 24843) (Fission yeast).